A 706-amino-acid polypeptide reads, in one-letter code: Glutamine-dependent NAD(+) synthetase (706 aa).

The CN hydrolase domain maps to 5 to 275; that stretch reads VTVATCALNQ…VEVLTATLDL (271 aa). Residue E45 is the Proton acceptor; for glutaminase activity of the active site. Residue K114 is the For glutaminase activity of the active site. C175 serves as the catalytic Nucleophile; for glutaminase activity. The tract at residues 325 to 706 is ligase; that stretch reads YHSPEEEISL…AAPQSLDGVD (382 aa). 355–362 provides a ligand contact to ATP; the sequence is PLSGGVDS. Residue S357 is part of the active site.

This sequence in the C-terminal section; belongs to the NAD synthetase family. As to quaternary structure, homohexamer.

It carries out the reaction deamido-NAD(+) + L-glutamine + ATP + H2O = L-glutamate + AMP + diphosphate + NAD(+) + H(+). It participates in cofactor biosynthesis; NAD(+) biosynthesis; NAD(+) from deamido-NAD(+) (L-Gln route): step 1/1. Functionally, catalyzes the final step of the nicotinamide adenine dinucleotide (NAD) de novo synthesis pathway, the ATP-dependent amidation of deamido-NAD using L-glutamine as a nitrogen source. The sequence is that of Glutamine-dependent NAD(+) synthetase (NADSYN1) from Macaca fascicularis (Crab-eating macaque).